The sequence spans 277 residues: Secoisolariciresinol dehydrogenase (277 aa).

Residues 24 to 29, D48, V73, and N99 each bind NAD(+); that span reads GGASGI. S163 lines the substrate pocket. Y166 functions as the Proton donor/acceptor in the catalytic mechanism. Residue K170 participates in NAD(+) binding.

The protein belongs to the short-chain dehydrogenases/reductases (SDR) family. In terms of assembly, homotetramer.

It catalyses the reaction (-)-secoisolariciresinol + 2 NAD(+) = (-)-matairesinol + 2 NADH + 2 H(+). Its function is as follows. Oxidoreductase involved in lignan biosynthesis. Catalyzes the stereospecific conversion of (-)-secoisolariciresinol to (-)-matairesinol via a lactol intermediate. The chain is Secoisolariciresinol dehydrogenase from Forsythia intermedia (Border forsythia).